The primary structure comprises 301 residues: Vomeronasal type-1 receptor 4 (301 aa).

Residues 1 to 5 (MASRY) are Extracellular-facing. The chain crosses the membrane as a helical span at residues 6–26 (VAVGMILSQTVVGVLGSFSVL). At 27-48 (LHYLSFYCTGCRLRSTDLIVKH) the chain is on the cytoplasmic side. Residues 49-69 (LIVANFLALRCKGVPQTMAAF) form a helical membrane-spanning segment. Residues 70-88 (GVRYFLNALGCKLVFYLHR) lie on the Extracellular side of the membrane. The helical transmembrane segment at 89–109 (VGRGVSIGTTCLLSVFQVITV) threads the bilayer. Residues 110-126 (SSRKSRWAKLKEKAPKH) lie on the Cytoplasmic side of the membrane. A helical transmembrane segment spans residues 127–147 (VGFSVLLCWIVCMLVNIIFPM). The Extracellular portion of the chain corresponds to 148-185 (YVTGKWNYTNITVNEDLGYCSGGGNNKIAQTLRAMLLS). 2 N-linked (GlcNAc...) asparagine glycosylation sites follow: N154 and N157. A helical membrane pass occupies residues 186 to 206 (FPDVLCLGLMLWVSSSMVCIL). The Cytoplasmic segment spans residues 207–234 (HRHKQRVQHIDRSNLSPRASPENRATQS). A helical transmembrane segment spans residues 235–255 (ILILVSTFVSSYTLSCLFQVC). Over 256 to 264 (MALLDNPNS) the chain is Extracellular. Residues 265-285 (LLVNTSALMSVCFPTLSPFVL) form a helical membrane-spanning segment. Topologically, residues 286–301 (MSCDPSVYRFCFAWKR) are cytoplasmic.

This sequence belongs to the G-protein coupled receptor 1 family.

It is found in the cell membrane. In terms of biological role, putative pheromone receptor. In Homo sapiens (Human), this protein is Vomeronasal type-1 receptor 4 (VN1R4).